The primary structure comprises 118 residues: Non-specific lipid-transfer protein 1 (118 aa).

The first 20 residues, 1-20 (MARLAVAIAVVAAVVVVLAA), serve as a signal peptide directing secretion. Intrachain disulfides connect Cys-29/Cys-77, Cys-39/Cys-54, Cys-55/Cys-100, and Cys-75/Cys-114.

It belongs to the plant LTP family.

In terms of biological role, plant non-specific lipid-transfer proteins transfer phospholipids as well as galactolipids across membranes. May play a role in wax or cutin deposition in the cell walls of expanding epidermal cells and certain secretory tissues. This is Non-specific lipid-transfer protein 1 (LTP1) from Sorghum bicolor (Sorghum).